The primary structure comprises 754 residues: Subtilisin-like protease SBT3.12 (754 aa).

An N-terminal signal peptide occupies residues 1-28 (MGIVKGRSRAGLFIGFLFIVNVGFCVFA). The propeptide at 29–117 (QESSNEERKI…VAPNRKVELQ (89 aa)) is activation peptide. The Inhibitor I9 domain occupies 39–116 (YVVHLGVRRH…SVAPNRKVEL (78 aa)). The Peptidase S8 domain maps to 121 to 606 (IYDYLGLSPS…AGLVNAERAK (486 aa)). The active-site Charge relay system is D151. Residue N206 is glycosylated (N-linked (GlcNAc...) asparagine). The active-site Charge relay system is H224. Residues N239 and N369 are each glycosylated (N-linked (GlcNAc...) asparagine). Catalysis depends on S537, which acts as the Charge relay system. Residues N629 and N740 are each glycosylated (N-linked (GlcNAc...) asparagine).

This sequence belongs to the peptidase S8 family.

It is found in the secreted. The sequence is that of Subtilisin-like protease SBT3.12 from Arabidopsis thaliana (Mouse-ear cress).